Consider the following 548-residue polypeptide: Membrane protein insertase YidC (548 aa).

A helical transmembrane segment spans residues 6–26; sequence NLLVIALLFVSFMIWQAWEQD. The disordered stretch occupies residues 28-55; that stretch reads NPQPQAQQTTQTTTTAAGSAADQGVPAS. A compositionally biased stretch (low complexity) spans 30–50; it reads QPQAQQTTQTTTTAAGSAADQ. Helical transmembrane passes span 350–370, 420–440, 458–478, and 499–519; these read FVGNWGFSIIIITFIVRGIMY, LGGCFPLLIQMPIFLALYYML, LSAQDPYYILPILMGVTMFFI, and PVIFTVFFLWFPSGLVLYYIV.

The protein belongs to the OXA1/ALB3/YidC family. Type 1 subfamily. As to quaternary structure, interacts with the Sec translocase complex via SecD. Specifically interacts with transmembrane segments of nascent integral membrane proteins during membrane integration.

Its subcellular location is the cell inner membrane. Its function is as follows. Required for the insertion and/or proper folding and/or complex formation of integral membrane proteins into the membrane. Involved in integration of membrane proteins that insert both dependently and independently of the Sec translocase complex, as well as at least some lipoproteins. Aids folding of multispanning membrane proteins. The chain is Membrane protein insertase YidC from Escherichia coli (strain K12 / MC4100 / BW2952).